The primary structure comprises 145 residues: D-aminoacyl-tRNA deacylase (145 aa).

The Gly-cisPro motif, important for rejection of L-amino acids motif lies at 137–138 (GP).

Belongs to the DTD family. In terms of assembly, homodimer.

It is found in the cytoplasm. The catalysed reaction is glycyl-tRNA(Ala) + H2O = tRNA(Ala) + glycine + H(+). It catalyses the reaction a D-aminoacyl-tRNA + H2O = a tRNA + a D-alpha-amino acid + H(+). Its function is as follows. An aminoacyl-tRNA editing enzyme that deacylates mischarged D-aminoacyl-tRNAs. Also deacylates mischarged glycyl-tRNA(Ala), protecting cells against glycine mischarging by AlaRS. Acts via tRNA-based rather than protein-based catalysis; rejects L-amino acids rather than detecting D-amino acids in the active site. By recycling D-aminoacyl-tRNA to D-amino acids and free tRNA molecules, this enzyme counteracts the toxicity associated with the formation of D-aminoacyl-tRNA entities in vivo and helps enforce protein L-homochirality. This Pseudomonas fluorescens (strain Pf0-1) protein is D-aminoacyl-tRNA deacylase.